Consider the following 194-residue polypeptide: Threonylcarbamoyl-AMP synthase (194 aa).

A YrdC-like domain is found at 11–194 (FRNLMKIINA…GINYKIIRKG (184 aa)).

The protein belongs to the SUA5 family. TsaC subfamily.

It localises to the cytoplasm. The enzyme catalyses L-threonine + hydrogencarbonate + ATP = L-threonylcarbamoyladenylate + diphosphate + H2O. Its function is as follows. Required for the formation of a threonylcarbamoyl group on adenosine at position 37 (t(6)A37) in tRNAs that read codons beginning with adenine. Catalyzes the conversion of L-threonine, HCO(3)(-)/CO(2) and ATP to give threonylcarbamoyl-AMP (TC-AMP) as the acyladenylate intermediate, with the release of diphosphate. This Wigglesworthia glossinidia brevipalpis protein is Threonylcarbamoyl-AMP synthase.